A 448-amino-acid chain; its full sequence is ATP-dependent protease ATPase subunit HslU (448 aa).

Residues I18, G60–E65, D261, E326, and R398 contribute to the ATP site.

It belongs to the ClpX chaperone family. HslU subfamily. A double ring-shaped homohexamer of HslV is capped on each side by a ring-shaped HslU homohexamer. The assembly of the HslU/HslV complex is dependent on binding of ATP.

It is found in the cytoplasm. Functionally, ATPase subunit of a proteasome-like degradation complex; this subunit has chaperone activity. The binding of ATP and its subsequent hydrolysis by HslU are essential for unfolding of protein substrates subsequently hydrolyzed by HslV. HslU recognizes the N-terminal part of its protein substrates and unfolds these before they are guided to HslV for hydrolysis. This Paraburkholderia phytofirmans (strain DSM 17436 / LMG 22146 / PsJN) (Burkholderia phytofirmans) protein is ATP-dependent protease ATPase subunit HslU.